Consider the following 189-residue polypeptide: Elongation factor P (189 aa).

Belongs to the elongation factor P family.

It is found in the cytoplasm. The protein operates within protein biosynthesis; polypeptide chain elongation. Involved in peptide bond synthesis. Stimulates efficient translation and peptide-bond synthesis on native or reconstituted 70S ribosomes in vitro. Probably functions indirectly by altering the affinity of the ribosome for aminoacyl-tRNA, thus increasing their reactivity as acceptors for peptidyl transferase. The polypeptide is Elongation factor P (Orientia tsutsugamushi (strain Ikeda) (Rickettsia tsutsugamushi)).